A 567-amino-acid polypeptide reads, in one-letter code: Sporulation-specific protein 5 (567 aa).

Positions 1–18 are enriched in polar residues; sequence MNGIITPQKQKQLMSSPS. Disordered regions lie at residues 1–39 and 52–76; these read MNGIITPQKQKQLMSSPSRDPLSTTELSTPTSQTTVDVN and ILLTPGTSPNATPGSSELGLSKKPN. A compositionally biased stretch (low complexity) spans 21 to 35; it reads PLSTTELSTPTSQTT. The segment covering 56–66 has biased composition (polar residues); it reads PGTSPNATPGS. RRM domains lie at 296–380 and 384–462; these read RNVY…SLQD and TNLY…FADS.

The protein localises to the cytoplasm. Functionally, RNA-binding protein which plays a role in sporulation. Regulates the progression of meiosis I and may function in the vicinity of the Mei2 dot. The protein is Sporulation-specific protein 5 (spo5) of Schizosaccharomyces pombe (strain 972 / ATCC 24843) (Fission yeast).